A 171-amino-acid chain; its full sequence is S-ribosylhomocysteine lyase (171 aa).

Residues H54, H58, and C128 each coordinate Fe cation.

It belongs to the LuxS family. Homodimer. Requires Fe cation as cofactor.

The catalysed reaction is S-(5-deoxy-D-ribos-5-yl)-L-homocysteine = (S)-4,5-dihydroxypentane-2,3-dione + L-homocysteine. Involved in the synthesis of autoinducer 2 (AI-2) which is secreted by bacteria and is used to communicate both the cell density and the metabolic potential of the environment. The regulation of gene expression in response to changes in cell density is called quorum sensing. Catalyzes the transformation of S-ribosylhomocysteine (RHC) to homocysteine (HC) and 4,5-dihydroxy-2,3-pentadione (DPD). In Shigella boydii serotype 4 (strain Sb227), this protein is S-ribosylhomocysteine lyase.